The sequence spans 336 residues: F-box protein At5g50450 (336 aa).

The region spanning asparagine 19 to alanine 70 is the F-box domain. Residues histidine 263, cysteine 266, cysteine 279, cysteine 282, cysteine 288, cysteine 292, histidine 301, and cysteine 305 each coordinate Zn(2+). The MYND-type; atypical zinc-finger motif lies at histidine 263 to cysteine 305.

The chain is F-box protein At5g50450 from Arabidopsis thaliana (Mouse-ear cress).